The sequence spans 194 residues: Der GTPase-activating protein YihI (194 aa).

The disordered stretch occupies residues 1 to 81 (MSRSKKTRRI…AKVKKDPRVG (81 aa)). Basic and acidic residues-rich tracts occupy residues 9–23 (RISD…DKKP) and 36–47 (TRYELDVQAREE). Over residues 59–70 (GSRNVITEQKTA) the composition is skewed to polar residues.

It belongs to the YihI family. As to quaternary structure, interacts with Der.

Functionally, a GTPase-activating protein (GAP) that modifies Der/EngA GTPase function. May play a role in ribosome biogenesis. The sequence is that of Der GTPase-activating protein YihI from Haemophilus ducreyi (strain 35000HP / ATCC 700724).